The following is a 279-amino-acid chain: Orotidine 5'-phosphate decarboxylase (279 aa).

Substrate contacts are provided by residues Asp-8, Lys-30, Asp-58–Thr-67, Thr-117, Arg-177, Gln-186, Gly-206, and Arg-207. Lys-60 acts as the Proton donor in catalysis.

This sequence belongs to the OMP decarboxylase family. Type 1 subfamily. As to quaternary structure, homodimer.

The catalysed reaction is orotidine 5'-phosphate + H(+) = UMP + CO2. Its pathway is pyrimidine metabolism; UMP biosynthesis via de novo pathway; UMP from orotate: step 2/2. Its function is as follows. Catalyzes the decarboxylation of orotidine 5'-monophosphate (OMP) to uridine 5'-monophosphate (UMP). The polypeptide is Orotidine 5'-phosphate decarboxylase (Campylobacter jejuni (strain RM1221)).